Consider the following 215-residue polypeptide: Pyrrolidone-carboxylate peptidase (215 aa).

Catalysis depends on residues glutamate 80, cysteine 143, and histidine 167.

It belongs to the peptidase C15 family. Homotetramer.

It is found in the cytoplasm. The catalysed reaction is Release of an N-terminal pyroglutamyl group from a polypeptide, the second amino acid generally not being Pro.. Its function is as follows. Removes 5-oxoproline from various penultimate amino acid residues except L-proline. This chain is Pyrrolidone-carboxylate peptidase, found in Yersinia pestis bv. Antiqua (strain Antiqua).